Here is a 192-residue protein sequence, read N- to C-terminus: CASP-like protein 4C1 (192 aa).

Residues 1–11 show a composition bias toward polar residues; the sequence is MRSPQSLRNGE. The disordered stretch occupies residues 1–23; sequence MRSPQSLRNGETPSPSPRPPRFP. At 1 to 40 the chain is on the cytoplasmic side; that stretch reads MRSPQSLRNGETPSPSPRPPRFPTPHFHSTVSLQKLKRFN. Positions 14–23 are enriched in pro residues; that stretch reads SPSPRPPRFP. A helical membrane pass occupies residues 41–61; it reads LLILVFRLSTFCFSLASSVFM. Residues 62 to 75 are Extracellular-facing; it reads LTNPTWYHFDAFRY. The chain crosses the membrane as a helical span at residues 76–96; it reads VFAANAIVAIYSLFEMAASVW. Topologically, residues 97–107 are cytoplasmic; sequence EISRGNTLFPE. Residues 108–128 form a helical membrane-spanning segment; the sequence is ILQVWFDFGHDQVFAYLLLSA. Residues 129 to 156 are Extracellular-facing; the sequence is DSAATALAKTLKGGDTCAASNAFCVQSY. A helical transmembrane segment spans residues 157-177; that stretch reads IAIALGFAGFLFLGLSSLLSG. At 178–192 the chain is on the cytoplasmic side; sequence FRVVCFLINGSRFYV.

It belongs to the Casparian strip membrane proteins (CASP) family. Homodimer and heterodimers.

Its subcellular location is the cell membrane. The sequence is that of CASP-like protein 4C1 from Ricinus communis (Castor bean).